The sequence spans 450 residues: UDP-N-acetylmuramoylalanine--D-glutamate ligase (450 aa).

Position 111-117 (111-117) interacts with ATP; that stretch reads GTNGKST.

This sequence belongs to the MurCDEF family.

It is found in the cytoplasm. It catalyses the reaction UDP-N-acetyl-alpha-D-muramoyl-L-alanine + D-glutamate + ATP = UDP-N-acetyl-alpha-D-muramoyl-L-alanyl-D-glutamate + ADP + phosphate + H(+). It functions in the pathway cell wall biogenesis; peptidoglycan biosynthesis. In terms of biological role, cell wall formation. Catalyzes the addition of glutamate to the nucleotide precursor UDP-N-acetylmuramoyl-L-alanine (UMA). This is UDP-N-acetylmuramoylalanine--D-glutamate ligase from Rickettsia bellii (strain RML369-C).